The primary structure comprises 649 residues: tRNA-guanine(15) transglycosylase (649 aa).

Catalysis depends on D88, which acts as the Nucleophile. Substrate-binding residues include D123 and A194. Positions 280, 282, and 285 each coordinate Zn(2+). Residues 572–647 form the PUA domain; sequence KYRVIVDKSV…VAVNIRGGLK (76 aa).

It belongs to the archaeosine tRNA-ribosyltransferase family. Zn(2+) serves as cofactor.

The catalysed reaction is guanosine(15) in tRNA + 7-cyano-7-deazaguanine = 7-cyano-7-carbaguanosine(15) in tRNA + guanine. It functions in the pathway tRNA modification; archaeosine-tRNA biosynthesis. Exchanges the guanine residue with 7-cyano-7-deazaguanine (preQ0) at position 15 in the dihydrouridine loop (D-loop) of archaeal tRNAs. The polypeptide is tRNA-guanine(15) transglycosylase (Methanococcus vannielii (strain ATCC 35089 / DSM 1224 / JCM 13029 / OCM 148 / SB)).